Here is a 151-residue protein sequence, read N- to C-terminus: D-aminoacyl-tRNA deacylase (151 aa).

The Gly-cisPro motif, important for rejection of L-amino acids signature appears at 137 to 138; it reads GP.

It belongs to the DTD family. Homodimer.

The protein localises to the cytoplasm. It carries out the reaction glycyl-tRNA(Ala) + H2O = tRNA(Ala) + glycine + H(+). It catalyses the reaction a D-aminoacyl-tRNA + H2O = a tRNA + a D-alpha-amino acid + H(+). Functionally, an aminoacyl-tRNA editing enzyme that deacylates mischarged D-aminoacyl-tRNAs. Also deacylates mischarged glycyl-tRNA(Ala), protecting cells against glycine mischarging by AlaRS. Acts via tRNA-based rather than protein-based catalysis; rejects L-amino acids rather than detecting D-amino acids in the active site. By recycling D-aminoacyl-tRNA to D-amino acids and free tRNA molecules, this enzyme counteracts the toxicity associated with the formation of D-aminoacyl-tRNA entities in vivo and helps enforce protein L-homochirality. This Geobacter metallireducens (strain ATCC 53774 / DSM 7210 / GS-15) protein is D-aminoacyl-tRNA deacylase.